The following is a 580-amino-acid chain: Putative multidrug export ATP-binding/permease protein YgaD (580 aa).

The Cytoplasmic portion of the chain corresponds to 1 to 17 (MGVMKRYMQFVKPYKKQ). Residues 18 to 38 (IFVTVLIGIVKFSIPLALPLL) traverse the membrane as a helical segment. Residues 19-307 (FVTVLIGIVK…LINSSTTLTQ (289 aa)) form the ABC transmembrane type-1 domain. The Extracellular segment spans residues 39-57 (LKYVVDDIIQGGGTASDKT). Residues 58 to 78 (TSLFTIMAIMFALFLILRPPV) traverse the membrane as a helical segment. Residues 79 to 135 (EYYRQYFAQWTASKVLYDIRAKLFDHIQKLSLRFYANTRTGEVISRVINDVEQTKDF) are Cytoplasmic-facing. The helical transmembrane segment at 136 to 156 (VITGLMNIWLDMLTILIVISI) threads the bilayer. Residues 157-163 (MLTLDVK) lie on the Extracellular side of the membrane. A helical membrane pass occupies residues 164–184 (LTLISIVLFPLYGISVKYFYG). Residues 185–243 (RLRKLTRERSQALAQVQGHLHERIQGMPVIRSFAIEDHEQAQFNEKNGHFLDKAIRHTN) lie on the Cytoplasmic side of the membrane. Residues 244–263 (WNAKTFAVVNTITDLAPLIV) traverse the membrane as a helical segment. Topologically, residues 264 to 268 (IACAG) are extracellular. A helical membrane pass occupies residues 269–288 (YFVINGPLTVGTMVAFVGYI). Topologically, residues 289-580 (DRMYNPVRRL…KHLFTIQNLN (292 aa)) are cytoplasmic. One can recognise an ABC transporter domain in the interval 341–576 (VEFQNVSFQY…ESQYKHLFTI (236 aa)). 375–382 (GMSGGGKS) serves as a coordination point for ATP.

Belongs to the ABC transporter superfamily. As to quaternary structure, homodimer.

The protein resides in the cell membrane. Functionally, may be involved in multidrug export. Transmembrane domains (TMD) form a pore in the cell membrane and the ATP-binding domain (NBD) is responsible for energy generation. The chain is Putative multidrug export ATP-binding/permease protein YgaD (ygaD) from Bacillus subtilis (strain 168).